We begin with the raw amino-acid sequence, 253 residues long: Ubiquinone biosynthesis O-methyltransferase (253 aa).

Positions 41, 72, 93, and 136 each coordinate S-adenosyl-L-methionine.

It belongs to the methyltransferase superfamily. UbiG/COQ3 family.

It carries out the reaction a 3-demethylubiquinol + S-adenosyl-L-methionine = a ubiquinol + S-adenosyl-L-homocysteine + H(+). The enzyme catalyses a 3-(all-trans-polyprenyl)benzene-1,2-diol + S-adenosyl-L-methionine = a 2-methoxy-6-(all-trans-polyprenyl)phenol + S-adenosyl-L-homocysteine + H(+). It participates in cofactor biosynthesis; ubiquinone biosynthesis. In terms of biological role, O-methyltransferase that catalyzes the 2 O-methylation steps in the ubiquinone biosynthetic pathway. This Azorhizobium caulinodans (strain ATCC 43989 / DSM 5975 / JCM 20966 / LMG 6465 / NBRC 14845 / NCIMB 13405 / ORS 571) protein is Ubiquinone biosynthesis O-methyltransferase.